A 515-amino-acid chain; its full sequence is Putative cytochrome P450 CYP13A2 (515 aa).

Cysteine 460 contacts heme.

Belongs to the cytochrome P450 family. The cofactor is heme.

In terms of biological role, cytochromes P450 are a group of heme-thiolate monooxygenases. They oxidize a variety of structurally unrelated compounds, including steroids, fatty acids, and xenobiotics. This chain is Putative cytochrome P450 CYP13A2 (cyp-13A2), found in Caenorhabditis elegans.